Consider the following 264-residue polypeptide: Formamidopyrimidine-DNA glycosylase (264 aa).

Proline 2 serves as the catalytic Schiff-base intermediate with DNA. Glutamate 3 (proton donor) is an active-site residue. Residue lysine 58 is the Proton donor; for beta-elimination activity of the active site. Residues histidine 89, arginine 107, and arginine 144 each coordinate DNA. An FPG-type zinc finger spans residues arginine 229–lysine 263. Arginine 253 serves as the catalytic Proton donor; for delta-elimination activity.

It belongs to the FPG family. Monomer. It depends on Zn(2+) as a cofactor.

The catalysed reaction is Hydrolysis of DNA containing ring-opened 7-methylguanine residues, releasing 2,6-diamino-4-hydroxy-5-(N-methyl)formamidopyrimidine.. It carries out the reaction 2'-deoxyribonucleotide-(2'-deoxyribose 5'-phosphate)-2'-deoxyribonucleotide-DNA = a 3'-end 2'-deoxyribonucleotide-(2,3-dehydro-2,3-deoxyribose 5'-phosphate)-DNA + a 5'-end 5'-phospho-2'-deoxyribonucleoside-DNA + H(+). Functionally, involved in base excision repair of DNA damaged by oxidation or by mutagenic agents. Acts as a DNA glycosylase that recognizes and removes damaged bases. Has a preference for oxidized purines, such as 7,8-dihydro-8-oxoguanine (8-oxoG). Has AP (apurinic/apyrimidinic) lyase activity and introduces nicks in the DNA strand. Cleaves the DNA backbone by beta-delta elimination to generate a single-strand break at the site of the removed base with both 3'- and 5'-phosphates. The polypeptide is Formamidopyrimidine-DNA glycosylase (Solibacter usitatus (strain Ellin6076)).